Here is a 263-residue protein sequence, read N- to C-terminus: MECKTVFLNGDFLKNSVNVNLNRLATVETLLRHVLGDSYETVLERAYLTHQSRIVHPDIQLCKLEGKSTSAHLNLTLCTRVLGGKGGFGSQLRAAGGRMSKKRNEQENQDSCRDLDGNRLGTIRQAKELSEYLAKKPAETRAKKEAKKQKLNKVLAADSSSSRFDDHEYLEDLEQSVSNVRDAFQNSLLYRRGSTSASSFSSGSNGATTDEPAEKEARNNNSSINSWSRRMQASESSNEAEGEDSESQTSKSLYEWDDPLYGL.

A propeptide spans Met-1–Gly-84 (UBL). Disordered stretches follow at residues Ala-95–Asn-118, Pro-137–Asp-158, and Ser-194–Leu-263. Residues Lys-102–Gly-117 are compositionally biased toward basic and acidic residues. Low complexity-rich tracts occupy residues Ser-194–Thr-209 and Asn-219–Arg-230.

It belongs to the SDE2 family. In terms of assembly, interacts with cay1/cactin. Interacts with prp19. Interacts with cwf12. Interacts with cdc5. The N-terminal UBL (ubiquitin-like) propeptide is cleaved at Gly-84 by the deubiquitinating enzymes ubp5 and ubp15; the resulting mature sde2 associates with spliceosomes. In terms of processing, polyubiquitinated; ubiquitination is partially dependent on ubr11.

The protein resides in the cytoplasm. The protein localises to the nucleus. In terms of biological role, plays a role in pre-mRNA splicing by facilitating excision of introns featuring relatively long (&gt;21 nucleotides) spacing between the branchpoint and 3'-splice site (ss). Recruits cactin to the spliceosome which may enable folding of RNA between the branchpoint and 3'-ss, to guide the splice site towards the spliceosome's catalytic center. Required for proper chromatin organization by assisting splicing of components involved in genomic stability and telomere organization. The chain is Splicing regulator sde2 from Schizosaccharomyces pombe (strain 972 / ATCC 24843) (Fission yeast).